A 1658-amino-acid chain; its full sequence is Protein TIC 214 (1658 aa).

A run of 6 helical transmembrane segments spans residues 28–48, 52–72, 82–102, 130–150, 165–185, and 199–219; these read FGLY…ILTI, LLGG…GQLI, IYVM…YMLF, IFLD…SPVF, ISFV…FINL, and VNYP…ILAL.

This sequence belongs to the TIC214 family. As to quaternary structure, part of the Tic complex.

The protein resides in the plastid. The protein localises to the chloroplast inner membrane. Involved in protein precursor import into chloroplasts. May be part of an intermediate translocation complex acting as a protein-conducting channel at the inner envelope. The sequence is that of Protein TIC 214 from Huperzia lucidula (Shining clubmoss).